The sequence spans 650 residues: Macrolide export ATP-binding/permease protein MacB (650 aa).

One can recognise an ABC transporter domain in the interval 5–243 (LELKDIRRSY…AGGTEPVVNT (239 aa)). An ATP-binding site is contributed by 41-48 (GASGSGKS). 5 consecutive transmembrane segments (helical) span residues 273–293 (LLTM…VVVG), 523–543 (LFLT…VMNI), 554–574 (ANDI…HLFF), 580–600 (VLPA…AFTL), and 613–633 (PLAL…FGWL).

Belongs to the ABC transporter superfamily. Macrolide exporter (TC 3.A.1.122) family. In terms of assembly, homodimer. Part of the tripartite efflux system MacAB-TolC, which is composed of an inner membrane transporter, MacB, a periplasmic membrane fusion protein, MacA, and an outer membrane component, TolC. The complex forms a large protein conduit and can translocate molecules across both the inner and outer membranes. Interacts with MacA.

The protein resides in the cell inner membrane. In terms of biological role, part of the tripartite efflux system MacAB-TolC. MacB is a non-canonical ABC transporter that contains transmembrane domains (TMD), which form a pore in the inner membrane, and an ATP-binding domain (NBD), which is responsible for energy generation. Confers resistance against macrolides. The polypeptide is Macrolide export ATP-binding/permease protein MacB (Shigella dysenteriae serotype 1 (strain Sd197)).